Consider the following 883-residue polypeptide: MNEQYSALRSNVSMLGKVLGETIKDALGEHILERVETIRKLSKSSRAGNDANRQELLTTLQNLSNDELLPVARAFSQFLNLANTAEQYHSISPKGEAASNPEVIARTLRKLKNQPELSEDTIKKAVESLSLELVLTAHPTEITRRTLIHKMVEVNACLKQLDNKDIADYEHNQLMRRLRQLIAQSWHTDEIRKLRPSPVDEAKWGFAVVENSLWQGVPNYLRELNEQLEENLGYKLPVEFVPVRFTSWMGGDRDGNPNVTADITRHVLLLSRWKATDLFLKDIQVLVSELSMVEATPELLALVGEEGAAEPYRYLMKNLRSRLMATQAWLEARLKGEELPKPEGLLTQNEELWEPLYACYQSLQACGMGIIANGDLLDTLRRVKCFGVPLVRIDIRQESTRHTEALGELTRYLGIGDYESWSEADKQAFLIRELNSKRPLLPRNWQPSAETREVLDTCQVIAEAPQGSIAAYVISMAKTPSDVLAVHLLLKEAGIGFAMPVAPLFETLDDLNNANDVMTQLLNIDWYRGLIQGKQMVMIGYSDSAKDAGVMAASWAQYQAQDALIKTCEKAGIELTLFHGRGGSIGRGGAPAHAALLSQPPGSLKGGLRVTEQGEMIRFKYGLPEITVSSLSLYTGAILEANLLPPPEPKESWRRIMDELSVISCDVYRGYVRENKDFVPYFRSATPEQELGKLPLGSRPAKRRPTGGVESLRAIPWIFAWTQNRLMLPAWLGAGTALQKVVEDGKQSELEAMCRDWPFFSTRLGMLEMVFAKADLWLAEYYDQRLVDKALWPLGKELRNLQEEDIKVVLAIANDSHLMADLPWIAESIQLRNIYTDPLNVLQAELLHRSRQAEKEGQEPDPRVEQALMVTIAGIAAGMRNTG.

Active-site residues include His-138 and Lys-546.

Belongs to the PEPCase type 1 family. The cofactor is Mg(2+).

The catalysed reaction is oxaloacetate + phosphate = phosphoenolpyruvate + hydrogencarbonate. Its function is as follows. Forms oxaloacetate, a four-carbon dicarboxylic acid source for the tricarboxylic acid cycle. The polypeptide is Phosphoenolpyruvate carboxylase (Escherichia coli O127:H6 (strain E2348/69 / EPEC)).